Consider the following 243-residue polypeptide: Transcription factor TCP6 (243 aa).

Residues 1–55 are disordered; that stretch reads MVMEPKKNQNLPSFLNPSRQNQDNDKKRKQTEVKGFDIVVGEKRKKKENEEEDQE. Polar residues predominate over residues 8–21; that stretch reads NQNLPSFLNPSRQN. Residues 22-35 show a composition bias toward basic and acidic residues; the sequence is QDNDKKRKQTEVKG. A coiled-coil region spans residues 42–66; that stretch reads EKRKKKENEEEDQEIQILYEKEKKK. The TCP domain occupies 68-122; it reads NKDRHLKVEGRGRRVRLPPLCAARIYQLTKELGHKSDGETLEWLLQHAEPSILSA.

Interacts with SPL.

The protein localises to the nucleus. The protein is Transcription factor TCP6 (TCP6) of Arabidopsis thaliana (Mouse-ear cress).